Reading from the N-terminus, the 267-residue chain is Rhomboid-type serine protease 2 (267 aa).

6 consecutive transmembrane segments (helical) span residues 20–40 (LPLFTRLIVLAIIALSIASLQ), 67–87 (FPLIHLNVIHAILNLLALTPL), 99–119 (TSLALFFGPLTSIPAVAYVLI), 126–146 (ANHGVLGASMWVFTLLAMESI), 155–179 (FVIGSVNIPTWTTPLIMSLVVAALI), and 185–206 (LGHLCGIAIGYVAGFGYAKLLA). Ser-134 acts as the Nucleophile in catalysis. Residue His-187 is part of the active site. Residues 247 to 267 (RPGPSGSAATELVGTTQRLGP) are disordered.

It belongs to the peptidase S54 family.

It is found in the golgi apparatus membrane. It localises to the golgi apparatus. Its subcellular location is the cis-Golgi network membrane. It carries out the reaction Cleaves type-1 transmembrane domains using a catalytic dyad composed of serine and histidine that are contributed by different transmembrane domains.. In terms of biological role, probable rhomboid-type serine protease that catalyzes intramembrane proteolysis. The chain is Rhomboid-type serine protease 2 (RBD2) from Gibberella zeae (strain ATCC MYA-4620 / CBS 123657 / FGSC 9075 / NRRL 31084 / PH-1) (Wheat head blight fungus).